We begin with the raw amino-acid sequence, 175 residues long: Albumin-1 (175 aa).

An intrachain disulfide couples cysteine 135 to cysteine 141.

This sequence belongs to the protease inhibitor I3 (leguminous Kunitz-type inhibitor) family.

2S seed storage protein. The protein is Albumin-1 of Psophocarpus tetragonolobus (Winged bean).